A 351-amino-acid polypeptide reads, in one-letter code: Transmembrane protein 255A (351 aa).

The next 4 membrane-spanning stretches (helical) occupy residues 30–50 (IYVT…GLAA), 57–77 (VTVG…LGII), 89–109 (LVAS…CAIV), and 226–246 (TILN…LGGF). The tract at residues 302–331 (FPSSPPSGLSDEQEPQSPSPSPSYMWSSSA) is disordered.

This sequence belongs to the TMEM255 family.

Its subcellular location is the membrane. The protein is Transmembrane protein 255A (Tmem255a) of Mus musculus (Mouse).